A 97-amino-acid chain; its full sequence is Kininogen-1 (97 aa).

The first 23 residues, 1–23, serve as a signal peptide directing secretion; the sequence is MRLWFCLSFLIILCVEHFPGTLA.

The protein belongs to the bradykinin-related peptide family. In terms of tissue distribution, expressed by the skin glands.

The protein resides in the secreted. Its function is as follows. [Ala3,Thr6]bradykinin: produces in vitro relaxation of rat arterial smooth muscle and constriction of intestinal smooth muscle. Possesses insulin-releasing activity. May target bradykinin receptors (BDKRB). The chain is Kininogen-1 from Bombina variegata (Yellow-bellied toad).